Reading from the N-terminus, the 645-residue chain is 1,4-alpha-glucan branching enzyme GlgB (645 aa).

Asp-309 functions as the Nucleophile in the catalytic mechanism. The active-site Proton donor is the Glu-352. The segment at 619–645 (VKTRKGSKKQDGSKTKVRSNVTSRGKR) is disordered. Residues 636–645 (RSNVTSRGKR) are compositionally biased toward polar residues.

It belongs to the glycosyl hydrolase 13 family. GlgB subfamily. As to quaternary structure, monomer.

It carries out the reaction Transfers a segment of a (1-&gt;4)-alpha-D-glucan chain to a primary hydroxy group in a similar glucan chain.. The protein operates within glycan biosynthesis; glycogen biosynthesis. In terms of biological role, catalyzes the formation of the alpha-1,6-glucosidic linkages in glycogen by scission of a 1,4-alpha-linked oligosaccharide from growing alpha-1,4-glucan chains and the subsequent attachment of the oligosaccharide to the alpha-1,6 position. The chain is 1,4-alpha-glucan branching enzyme GlgB from Bacillus cereus (strain G9842).